A 300-amino-acid chain; its full sequence is Tumor necrosis factor receptor superfamily member 6B (300 aa).

The signal sequence occupies residues 1-29 (MRALEGPGLSLLCLVLALPALLPVPAVRG). 4 TNFR-Cys repeats span residues 31 to 70 (AETP…PTTC), 72 to 113 (PCPP…NRAC), 115 to 150 (CRTG…NTQC), and 152 to 193 (PCPP…DTLC). 8 cysteine pairs are disulfide-bonded: cysteine 49–cysteine 62, cysteine 52–cysteine 70, cysteine 73–cysteine 88, cysteine 91–cysteine 105, cysteine 95–cysteine 113, cysteine 115–cysteine 126, cysteine 132–cysteine 150, and cysteine 153–cysteine 168. Asparagine 173 carries N-linked (GlcNAc...) asparagine glycosylation. Cysteine 174 and cysteine 193 form a disulfide bridge.

In terms of tissue distribution, detected in fetal lung, brain and liver. Detected in adult stomach, spinal cord, lymph node, trachea, spleen, colon and lung. Highly expressed in several primary tumors from colon, stomach, rectum, esophagus and in SW480 colon carcinoma cells.

Its subcellular location is the secreted. Its function is as follows. Decoy receptor that can neutralize the cytotoxic ligands TNFS14/LIGHT, TNFSF15 and TNFSF6/FASL. Protects against apoptosis. This chain is Tumor necrosis factor receptor superfamily member 6B (TNFRSF6B), found in Homo sapiens (Human).